The primary structure comprises 86 residues: Large ribosomal subunit protein bL27 (86 aa).

The segment at 1-24 (MAHKKGTGSTRNGRDSNSKRLGVK) is disordered.

This sequence belongs to the bacterial ribosomal protein bL27 family.

In Prochlorococcus marinus (strain MIT 9312), this protein is Large ribosomal subunit protein bL27.